The primary structure comprises 559 residues: Dihydroxy-acid dehydratase (559 aa).

Aspartate 78 serves as a coordination point for Mg(2+). Cysteine 119 is a binding site for [2Fe-2S] cluster. The Mg(2+) site is built by aspartate 120 and lysine 121. An N6-carboxylysine modification is found at lysine 121. Cysteine 191 serves as a coordination point for [2Fe-2S] cluster. Mg(2+) is bound at residue glutamate 442. Serine 468 functions as the Proton acceptor in the catalytic mechanism.

It belongs to the IlvD/Edd family. In terms of assembly, homodimer. Requires [2Fe-2S] cluster as cofactor. It depends on Mg(2+) as a cofactor.

It catalyses the reaction (2R)-2,3-dihydroxy-3-methylbutanoate = 3-methyl-2-oxobutanoate + H2O. The enzyme catalyses (2R,3R)-2,3-dihydroxy-3-methylpentanoate = (S)-3-methyl-2-oxopentanoate + H2O. Its pathway is amino-acid biosynthesis; L-isoleucine biosynthesis; L-isoleucine from 2-oxobutanoate: step 3/4. The protein operates within amino-acid biosynthesis; L-valine biosynthesis; L-valine from pyruvate: step 3/4. Functionally, functions in the biosynthesis of branched-chain amino acids. Catalyzes the dehydration of (2R,3R)-2,3-dihydroxy-3-methylpentanoate (2,3-dihydroxy-3-methylvalerate) into 2-oxo-3-methylpentanoate (2-oxo-3-methylvalerate) and of (2R)-2,3-dihydroxy-3-methylbutanoate (2,3-dihydroxyisovalerate) into 2-oxo-3-methylbutanoate (2-oxoisovalerate), the penultimate precursor to L-isoleucine and L-valine, respectively. The polypeptide is Dihydroxy-acid dehydratase (Agathobacter rectalis (strain ATCC 33656 / DSM 3377 / JCM 17463 / KCTC 5835 / VPI 0990) (Eubacterium rectale)).